A 114-amino-acid polypeptide reads, in one-letter code: MTSAEHLTKGQQAEDRALAYLEQQGLKLVERNVRYPFGEIDLIMRQGHKWIFIEVKYRQSKQFGGALQAVSRGKIARLNRAASHYMQLNQIDAQCRFDLLAIDGDDIQWITNAF.

The protein belongs to the UPF0102 family.

The polypeptide is UPF0102 protein Shew_0226 (Shewanella loihica (strain ATCC BAA-1088 / PV-4)).